Reading from the N-terminus, the 35-residue chain is Mu-theraphotoxin-Hd1a (35 aa).

3 cysteine pairs are disulfide-bonded: Cys2–Cys17, Cys9–Cys24, and Cys16–Cys31.

It belongs to the neurotoxin 10 (Hwtx-1) family. 22 (Htx-4) subfamily. As to expression, expressed by the venom gland.

Its subcellular location is the secreted. Its function is as follows. Gating-modifier toxin that reversibly and voltage-independently inhibits human Nav1.1/SCN1A and Nav1.7/SCN9A (IC(50)=111 nM). It also shows moderate inhibition on Nav1.2/SCN2A (1 uM inhibits current by 55%), Nav1.6/SCN8A (31%), Nav1.3/SCN5A (27%) and Nav1.4/SCN4A (23%). This toxin inhibits Nav1.7/SCN9A by interacting with the S3b-S4 paddle motif in channel domain II. The sequence is that of Mu-theraphotoxin-Hd1a from Cyriopagopus doriae (Tarantula spider).